We begin with the raw amino-acid sequence, 783 residues long: Metabotropic glutamate receptor-like protein J (783 aa).

The signal sequence occupies residues 1–20 (MKILLYIAIILSFFSLITIS). At 21–383 (SECKIAVLLS…DYPNSLKYGV (363 aa)) the chain is on the extracellular side. Residues 56 to 85 (DFSIYYENLEESMEEAEKAFQDALHKGANL) adopt a coiled-coil conformation. N181, N196, N256, N282, and N315 each carry an N-linked (GlcNAc...) asparagine glycan. The chain crosses the membrane as a helical span at residues 384–404 (TIVSGVCIFICLVCMTLVVVF). The Cytoplasmic portion of the chain corresponds to 405-415 (KKARVIKSSSP). Residues 416–436 (AFLLLILLGCCIIFAACILFA) form a helical membrane-spanning segment. Topologically, residues 437-443 (QSPTNQT) are extracellular. N-linked (GlcNAc...) asparagine glycosylation is present at N441. Residues 444 to 464 (CSARIWLLSLGYTLFLGNLLV) traverse the membrane as a helical segment. Residues 465–489 (KNWRIWLLFDNPKLKKRAITNWKLY) are Cytoplasmic-facing. A helical membrane pass occupies residues 490–510 (PWVFAILAIDVMILAIWQGLG). The Extracellular segment spans residues 511 to 538 (NINAESRIGYDSLTQYQYKNVCSSDDQG). A helical transmembrane segment spans residues 539–559 (SIALYLLLVFHGLVLLVACFI). The Cytoplasmic segment spans residues 560-575 (SFKIKVVDIEEFNESK). Residues 576–596 (PITTSVYIITFCLFIVIPLMV) form a helical membrane-spanning segment. Residues 597–604 (SPQSLTSQ) are Extracellular-facing. A helical transmembrane segment spans residues 605 to 625 (TTIICVCAIVTTLISMLLLFG). At 626 to 783 (SKFYKMATQG…GETEIDSNNV (158 aa)) the chain is on the cytoplasmic side. Over residues 647-656 (KSSSKSSKSS) the composition is skewed to low complexity. Disordered stretches follow at residues 647–696 (KSSS…FSNK) and 731–783 (QLQQ…SNNV). A compositionally biased stretch (acidic residues) spans 670–679 (GEDDTSDETS). Polar residues predominate over residues 763 to 783 (VLSKRISNQQNGETEIDSNNV).

This sequence in the N-terminal section; belongs to the BMP lipoprotein family. It in the C-terminal section; belongs to the G-protein coupled receptor 3 family. GABA-B receptor subfamily.

Its subcellular location is the cell membrane. It is found in the membrane. The protein localises to the endoplasmic reticulum membrane. The protein resides in the golgi apparatus membrane. It localises to the nucleus envelope. In terms of biological role, may act during the development and be a negative regulator. This is Metabotropic glutamate receptor-like protein J (grlJ) from Dictyostelium discoideum (Social amoeba).